A 309-amino-acid polypeptide reads, in one-letter code: Foldase protein PrsA 2 (309 aa).

An N-terminal signal peptide occupies residues 1 to 22 (MKQMNKLITGVVTLATVVTLSA). Cys23 is lipidated: N-palmitoyl cysteine. Cys23 carries the S-diacylglycerol cysteine lipid modification. Residues 146–241 (TPTMTAEIMQ…RTYHIIKVTK (96 aa)) form the PpiC domain.

It belongs to the PrsA family.

It is found in the cell membrane. It carries out the reaction [protein]-peptidylproline (omega=180) = [protein]-peptidylproline (omega=0). Plays a major role in protein secretion by helping the post-translocational extracellular folding of several secreted proteins. The sequence is that of Foldase protein PrsA 2 (prsA2) from Streptococcus pyogenes serotype M1.